The primary structure comprises 429 residues: Enolase (429 aa).

Gln-164 is a binding site for (2R)-2-phosphoglycerate. The Proton donor role is filled by Glu-206. Residues Asp-243, Glu-286, and Asp-313 each coordinate Mg(2+). Lys-338, Arg-367, Ser-368, and Lys-389 together coordinate (2R)-2-phosphoglycerate. Catalysis depends on Lys-338, which acts as the Proton acceptor.

It belongs to the enolase family. The cofactor is Mg(2+).

It is found in the cytoplasm. Its subcellular location is the secreted. The protein localises to the cell surface. It catalyses the reaction (2R)-2-phosphoglycerate = phosphoenolpyruvate + H2O. It functions in the pathway carbohydrate degradation; glycolysis; pyruvate from D-glyceraldehyde 3-phosphate: step 4/5. Its function is as follows. Catalyzes the reversible conversion of 2-phosphoglycerate (2-PG) into phosphoenolpyruvate (PEP). It is essential for the degradation of carbohydrates via glycolysis. In Thermotoga sp. (strain RQ2), this protein is Enolase.